The primary structure comprises 906 residues: Catenin alpha-1 (906 aa).

An N-acetylthreonine modification is found at threonine 2. The interval threonine 2 to cysteine 228 is involved in homodimerization. Residue lysine 57 forms a Glycyl lysine isopeptide (Lys-Gly) (interchain with G-Cter in SUMO2) linkage. Positions valine 97 to tyrosine 148 are interaction with JUP and CTNNB1. A phosphoserine mark is found at serine 264, serine 295, and serine 297. Residues threonine 325–phenylalanine 394 form an interaction with alpha-actinin region. A Phosphothreonine modification is found at threonine 634. Residue serine 641 is modified to Phosphoserine. Residue threonine 645 is modified to Phosphothreonine. Serine 652 and serine 655 each carry phosphoserine. Position 658 is a phosphothreonine (threonine 658). Residue lysine 797 forms a Glycyl lysine isopeptide (Lys-Gly) (interchain with G-Cter in SUMO2) linkage. Serine 851 is modified (phosphoserine). Over residues proline 864–threonine 880 the composition is skewed to basic and acidic residues. Residues proline 864 to valine 894 are disordered. Over residues lysine 881 to valine 891 the composition is skewed to basic residues.

This sequence belongs to the vinculin/alpha-catenin family. As to quaternary structure, monomer and homodimer; the monomer preferentially binds to CTNNB1 and the homodimer to actin. Component of an cadherin:catenin adhesion complex composed of at least of CDH26, beta-catenin/CTNNB1, alpha-catenin/CTNNA1 and p120 catenin/CTNND1. Possible component of an E-cadherin/ catenin adhesion complex together with E-cadherin/CDH1 and beta-catenin/CTNNB1 or gamma-catenin/JUP; the complex is located to adherens junctions. The stable association of CTNNA1 is controversial as CTNNA1 was shown not to bind to F-actin when assembled in the complex. Alternatively, the CTNNA1-containing complex may be linked to F-actin by other proteins such as LIMA1. Binds AFDN and F-actin. Interacts with LIMA1. Interacts with ARHGAP21. Interacts with AJUBA. Interacts with vinculin/VCL. Interacts with TJP2/ZO2 (via N-terminus). Interacts with TJP1/ZO1 (via N-terminus). Post-translationally, sumoylated. In terms of processing, phosphorylation seems to contribute to the strength of cell-cell adhesion rather than to the basic capacity for cell-cell adhesion. In terms of tissue distribution, expressed in cerebellum, heart, liver, small intestine, kidney and placenta (at protein level).

It is found in the cytoplasm. The protein resides in the cytoskeleton. The protein localises to the cell junction. It localises to the adherens junction. Its subcellular location is the cell membrane. It is found in the nucleus. Functionally, associates with the cytoplasmic domain of a variety of cadherins. The association of catenins to cadherins produces a complex which is linked to the actin filament network, and which seems to be of primary importance for cadherins cell-adhesion properties. Can associate with both E- and N-cadherins. Originally believed to be a stable component of E-cadherin/catenin adhesion complexes and to mediate the linkage of cadherins to the actin cytoskeleton at adherens junctions. In contrast, cortical actin was found to be much more dynamic than E-cadherin/catenin complexes and CTNNA1 was shown not to bind to F-actin when assembled in the complex suggesting a different linkage between actin and adherens junctions components. The homodimeric form may regulate actin filament assembly and inhibit actin branching by competing with the Arp2/3 complex for binding to actin filaments. Involved in the regulation of WWTR1/TAZ, YAP1 and TGFB1-dependent SMAD2 and SMAD3 nuclear accumulation. May play a crucial role in cell differentiation. This Mus musculus (Mouse) protein is Catenin alpha-1.